Here is a 315-residue protein sequence, read N- to C-terminus: Ribonuclease Z (315 aa).

Positions 61, 63, 65, 66, 151, 219, and 278 each coordinate Zn(2+). Asp-65 serves as the catalytic Proton acceptor.

It belongs to the RNase Z family. In terms of assembly, homodimer. Zn(2+) is required as a cofactor.

The enzyme catalyses Endonucleolytic cleavage of RNA, removing extra 3' nucleotides from tRNA precursor, generating 3' termini of tRNAs. A 3'-hydroxy group is left at the tRNA terminus and a 5'-phosphoryl group is left at the trailer molecule.. Functionally, zinc phosphodiesterase, which displays some tRNA 3'-processing endonuclease activity. Probably involved in tRNA maturation, by removing a 3'-trailer from precursor tRNA. This Clostridium botulinum (strain Eklund 17B / Type B) protein is Ribonuclease Z.